Consider the following 187-residue polypeptide: Large ribosomal subunit protein bL17 (187 aa).

Residues 122–187 (PKVRSSRTST…EADAAEKSDK (66 aa)) form a disordered region. The segment covering 127–144 (SRTSTATAPVAAAPVAEA) has biased composition (low complexity). Residues 145–157 (PAEESDVPVEETD) show a composition bias toward acidic residues. Positions 167–176 (AETTDAAAAE) are enriched in low complexity.

The protein belongs to the bacterial ribosomal protein bL17 family. Part of the 50S ribosomal subunit. Contacts protein L32.

The polypeptide is Large ribosomal subunit protein bL17 (Clavibacter sepedonicus (Clavibacter michiganensis subsp. sepedonicus)).